A 276-amino-acid polypeptide reads, in one-letter code: Urease accessory protein UreD (276 aa).

This sequence belongs to the UreD family. In terms of assembly, ureD, UreF and UreG form a complex that acts as a GTP-hydrolysis-dependent molecular chaperone, activating the urease apoprotein by helping to assemble the nickel containing metallocenter of UreC. The UreE protein probably delivers the nickel.

Its subcellular location is the cytoplasm. Its function is as follows. Required for maturation of urease via the functional incorporation of the urease nickel metallocenter. This Albidiferax ferrireducens (strain ATCC BAA-621 / DSM 15236 / T118) (Rhodoferax ferrireducens) protein is Urease accessory protein UreD.